The following is a 100-amino-acid chain: Replication restart protein PriB (100 aa).

Residues 1 to 100 (MTNRIELSGV…VLHADKISQI (100 aa)) form the SSB domain.

This sequence belongs to the PriB family. As to quaternary structure, homodimer. Interacts with PriA and DnaT. Component of the replication restart primosome. Primosome assembly occurs via a 'hand-off' mechanism. PriA binds to replication forks, subsequently PriB then DnaT bind; DnaT then displaces ssDNA to generate the helicase loading substrate.

Its function is as follows. Involved in the restart of stalled replication forks, which reloads the replicative helicase on sites other than the origin of replication; the PriA-PriB pathway is the major replication restart pathway. During primosome assembly it facilitates complex formation between PriA and DnaT on DNA; stabilizes PriA on DNA. Stimulates the DNA unwinding activity of PriA helicase. This Vibrio cholerae serotype O1 (strain ATCC 39315 / El Tor Inaba N16961) protein is Replication restart protein PriB.